Consider the following 108-residue polypeptide: MKNFDKFSTNEEFSSVYKVGKKWHCEGVIIFYLNSYEKKIAVVASKKVGKAVVRNRSKRILRALFAKFERYLQDGKYIFVAKNEITELSFSRLEKNLKWGLKKLECFK.

This sequence belongs to the RnpA family. In terms of assembly, consists of a catalytic RNA component (M1 or rnpB) and a protein subunit.

The enzyme catalyses Endonucleolytic cleavage of RNA, removing 5'-extranucleotides from tRNA precursor.. Functionally, RNaseP catalyzes the removal of the 5'-leader sequence from pre-tRNA to produce the mature 5'-terminus. It can also cleave other RNA substrates such as 4.5S RNA. The protein component plays an auxiliary but essential role in vivo by binding to the 5'-leader sequence and broadening the substrate specificity of the ribozyme. This is Ribonuclease P protein component from Campylobacter jejuni subsp. doylei (strain ATCC BAA-1458 / RM4099 / 269.97).